The chain runs to 217 residues: GTP cyclohydrolase 1 (217 aa).

Zn(2+) is bound by residues C109, H112, and C180.

This sequence belongs to the GTP cyclohydrolase I family. As to quaternary structure, toroid-shaped homodecamer, composed of two pentamers of five dimers.

The enzyme catalyses GTP + H2O = 7,8-dihydroneopterin 3'-triphosphate + formate + H(+). It functions in the pathway cofactor biosynthesis; 7,8-dihydroneopterin triphosphate biosynthesis; 7,8-dihydroneopterin triphosphate from GTP: step 1/1. This chain is GTP cyclohydrolase 1, found in Aliivibrio fischeri (strain ATCC 700601 / ES114) (Vibrio fischeri).